Reading from the N-terminus, the 237-residue chain is Myelin protein zero-like protein 3 (237 aa).

A signal peptide spans 1-32 (MQLARGTVGGRGCALFPLLSILVVQGARIVLS). Positions 33-149 (LEISADAHVR…NIPLTELTVT (117 aa)) constitute an Ig-like V-type domain. Residues 33-159 (LEISADAHVR…ERGFGTMLSS (127 aa)) are Extracellular-facing. A disulfide bond links C53 and C129. N-linked (GlcNAc...) asparagine glycosylation is present at N124. A helical membrane pass occupies residues 160 to 180 (VALLSILVFVPSAVVVILLLV). Residues 181-237 (RMGRKATGVQKRSRSGYKKSSIEVSDDTDQEDSNDCMTRLCVRCAECLDSDYEEEAY) lie on the Cytoplasmic side of the membrane.

Belongs to the myelin P0 protein family. Present in all tissues tested, including the skin. Present in the keratinocytes and sebocytes in the skin (at protein level).

The protein resides in the membrane. Functionally, mediates homophilic cell-cell adhesion. The polypeptide is Myelin protein zero-like protein 3 (Mpzl3) (Mus musculus (Mouse)).